We begin with the raw amino-acid sequence, 153 residues long: Endoribonuclease YbeY (153 aa).

Zn(2+) is bound by residues His-116, His-120, and His-126.

Belongs to the endoribonuclease YbeY family. It depends on Zn(2+) as a cofactor.

It localises to the cytoplasm. Functionally, single strand-specific metallo-endoribonuclease involved in late-stage 70S ribosome quality control and in maturation of the 3' terminus of the 16S rRNA. The chain is Endoribonuclease YbeY from Clavibacter michiganensis subsp. michiganensis (strain NCPPB 382).